A 468-amino-acid chain; its full sequence is Hydroxymethylglutaryl-CoA synthase B (468 aa).

Glu85 (proton donor/acceptor) is an active-site residue. Cys119 serves as the catalytic Acyl-thioester intermediate. Positions 119, 161, 211, 250, 259, 327, and 359 each coordinate (3S)-3-hydroxy-3-methylglutaryl-CoA. His250 serves as the catalytic Proton donor/acceptor.

The protein belongs to the thiolase-like superfamily. HMG-CoA synthase family.

The enzyme catalyses acetoacetyl-CoA + acetyl-CoA + H2O = (3S)-3-hydroxy-3-methylglutaryl-CoA + CoA + H(+). The protein operates within metabolic intermediate biosynthesis; (R)-mevalonate biosynthesis; (R)-mevalonate from acetyl-CoA: step 2/3. In terms of biological role, condenses acetyl-CoA with acetoacetyl-CoA to form HMG-CoA, which is the substrate for HMG-CoA reductase. The sequence is that of Hydroxymethylglutaryl-CoA synthase B (hgsB) from Dictyostelium discoideum (Social amoeba).